A 471-amino-acid chain; its full sequence is Tryptophanase (471 aa).

Residues K5, K115, and K156 each carry the N6-acetyllysine modification. An N6-(pyridoxal phosphate)lysine modification is found at K270. Residue K450 is modified to N6-acetyllysine.

The protein belongs to the beta-eliminating lyase family. In terms of assembly, homotetramer. Pyridoxal 5'-phosphate serves as cofactor.

The enzyme catalyses L-tryptophan + H2O = indole + pyruvate + NH4(+). It participates in amino-acid degradation; L-tryptophan degradation via pyruvate pathway; indole and pyruvate from L-tryptophan: step 1/1. This Shigella boydii serotype 18 (strain CDC 3083-94 / BS512) protein is Tryptophanase.